The following is a 539-amino-acid chain: Phosphatidylinositol 4-phosphate 5-kinase type-1 beta (539 aa).

Positions 1 to 21 (MSSTAENGDAVPGKQNEEKTY) are disordered. The PIPK domain occupies 25-395 (ASSAIKGAIQ…RFLKFMNSRV (371 aa)). Serine 445, serine 447, and serine 448 each carry phosphoserine.

As to quaternary structure, interacts with RAC1, AJUBA, PLD1, PLD2 and ARF1. Highly expressed in brain and testis. Barely detectable in liver and skeletal muscle.

It localises to the cytoplasm. The protein localises to the cytosol. Its subcellular location is the cell membrane. The protein resides in the endomembrane system. The enzyme catalyses a 1,2-diacyl-sn-glycero-3-phospho-(1D-myo-inositol 4-phosphate) + ATP = a 1,2-diacyl-sn-glycero-3-phospho-(1D-myo-inositol-4,5-bisphosphate) + ADP + H(+). The catalysed reaction is 1-octadecanoyl-2-(5Z,8Z,11Z,14Z)-eicosatetraenoyl-sn-glycero-3-phospho-1D-myo-inositol 4-phosphate + ATP = 1-octadecanoyl-2-(5Z,8Z,11Z,14Z)-eicosatetraenoyl-sn-glycero-3-phospho-1D-myo-inositol 4,5-bisphosphate + ADP + H(+). It carries out the reaction 1-octadecanoyl-2-(9Z)-octadecenoyl-sn-glycero-3-phospho-1D-myo-inositol 4-phosphate + ATP = 1-octadecanoyl-2-(9Z)-octadecenoyl-sn-glycero-3-phospho-1D-myo-inositol 4,5-bisphosphate + ADP + H(+). It catalyses the reaction 1-octadecanoyl-2-(9Z)-octadecenoyl-sn-glycero-3-phospho-1D-myo-inositol + ATP = 1-octadecanoyl-2-(9Z)-octadecenoyl-sn-glycero-3-phospho-1D-myo-inositol 5-phosphate + ADP + H(+). The enzyme catalyses 1-octadecanoyl-2-(9Z,12Z)-octadecadienoyl-sn-glycero-3-phospho-1D-myo-inositol + ATP = 1-octadecanoyl-2-(9Z,12Z)-octadecadienoyl-sn-glycero-3-phospho-1D-myo-inositol 5-phosphate + ADP + H(+). The catalysed reaction is 1-octadecanoyl-2-(5Z,8Z,11Z,14Z-eicosatetraenoyl)-sn-glycero-3-phospho-(1D-myo-inositol) + ATP = 1-octadecanoyl-2-(5Z,8Z,11Z,14Z)-eicosatetraenoyl-sn-glycero-3-phospho-1D-myo-inositol 5-phosphate + ADP + H(+). It carries out the reaction 1,2-di-(9Z,12Z)-octadecadienoyl-sn-glycero-3-phospho-1D-myo-inositol + ATP = 1,2-di(9Z,12Z)-octadecadienoyl-sn-glycero-3-phospho-1D-myo-inositol 5-phosphate + ADP + H(+). Its activity is regulated as follows. Activated by phosphatidic acid. In terms of biological role, catalyzes the phosphorylation of phosphatidylinositol 4-phosphate (PtdIns(4)P/PI4P) to form phosphatidylinositol 4,5-bisphosphate (PtdIns(4,5)P2/PIP2), a lipid second messenger that regulates several cellular processes such as signal transduction, vesicle trafficking, actin cytoskeleton dynamics, cell adhesion, and cell motility. PtdIns(4,5)P2 can directly act as a second messenger or can be utilized as a precursor to generate other second messengers: inositol 1,4,5-trisphosphate (IP3), diacylglycerol (DAG) or phosphatidylinositol-3,4,5-trisphosphate (PtdIns(3,4,5)P3/PIP3). Mediates RAC1-dependent reorganization of actin filaments. Contributes to the activation of phospholipase PLD2. Together with PIP5K1A, is required, after stimulation by G-protein coupled receptors, for the synthesis of IP3 that will induce stable platelet adhesion. This Mus musculus (Mouse) protein is Phosphatidylinositol 4-phosphate 5-kinase type-1 beta.